The primary structure comprises 372 residues: Queuine tRNA-ribosyltransferase (372 aa).

D92 (proton acceptor) is an active-site residue. Substrate contacts are provided by residues 92–96 (DSGGF), D146, Q188, and G215. The RNA binding stretch occupies residues 246–252 (GIGTLRE). The Nucleophile role is filled by D265. An RNA binding; important for wobble base 34 recognition region spans residues 270–274 (TRLGR). Positions 303, 305, 308, and 334 each coordinate Zn(2+).

The protein belongs to the queuine tRNA-ribosyltransferase family. As to quaternary structure, homodimer. Within each dimer, one monomer is responsible for RNA recognition and catalysis, while the other monomer binds to the replacement base PreQ1. Requires Zn(2+) as cofactor.

The enzyme catalyses 7-aminomethyl-7-carbaguanine + guanosine(34) in tRNA = 7-aminomethyl-7-carbaguanosine(34) in tRNA + guanine. The protein operates within tRNA modification; tRNA-queuosine biosynthesis. In terms of biological role, catalyzes the base-exchange of a guanine (G) residue with the queuine precursor 7-aminomethyl-7-deazaguanine (PreQ1) at position 34 (anticodon wobble position) in tRNAs with GU(N) anticodons (tRNA-Asp, -Asn, -His and -Tyr). Catalysis occurs through a double-displacement mechanism. The nucleophile active site attacks the C1' of nucleotide 34 to detach the guanine base from the RNA, forming a covalent enzyme-RNA intermediate. The proton acceptor active site deprotonates the incoming PreQ1, allowing a nucleophilic attack on the C1' of the ribose to form the product. After dissociation, two additional enzymatic reactions on the tRNA convert PreQ1 to queuine (Q), resulting in the hypermodified nucleoside queuosine (7-(((4,5-cis-dihydroxy-2-cyclopenten-1-yl)amino)methyl)-7-deazaguanosine). The protein is Queuine tRNA-ribosyltransferase of Synechococcus sp. (strain CC9311).